Reading from the N-terminus, the 169-residue chain is Cilia- and flagella-associated protein HOATZ (169 aa).

Disordered regions lie at residues 1-21 (METGPSEEPSGRKESQEMCPP), 52-89 (SQLVLRRDSSQRLPVARPRRSRGSENSHSSQSFHLASN), and 144-169 (KAKEHKAKKVVSESDKEDQEEVKTLD). Residues 75 to 89 (SENSHSSQSFHLASN) are compositionally biased toward polar residues.

The protein belongs to the HOATZ family.

It localises to the cytoplasm. The protein resides in the cell projection. It is found in the cilium. In terms of biological role, required for motile ciliogenesis and flagellar genesis by mediating the maturation of the glycolytic enzyme ENO4. This is Cilia- and flagella-associated protein HOATZ from Homo sapiens (Human).